The chain runs to 564 residues: Ribonuclease J (564 aa).

Positions 85, 87, 89, 90, 153, and 175 each coordinate Zn(2+). 375–379 contributes to the substrate binding site; that stretch reads HVSGH. Histidine 401 provides a ligand contact to Zn(2+).

Belongs to the metallo-beta-lactamase superfamily. RNA-metabolizing metallo-beta-lactamase-like family. Bacterial RNase J subfamily. In terms of assembly, homodimer, may be a subunit of the RNA degradosome. Zn(2+) serves as cofactor.

It localises to the cytoplasm. Its function is as follows. An RNase that has 5'-3' exonuclease and possibly endonuclease activity. Plays a role in 16S and 23S rRNA processing. Might have a role in mRNA maturation and/or decay. The polypeptide is Ribonuclease J (Sinorhizobium meliloti (strain Sm2011 / Rm2011 / 2011)).